Consider the following 179-residue polypeptide: NADH dehydrogenase [ubiquinone] 1 beta subcomplex subunit 9 (179 aa).

Ala-2 is modified (N-acetylalanine). Ser-85 carries the post-translational modification Phosphoserine. Residues 139-160 (QLQEETPVGGPRTEALPPARKQ) form a disordered region.

Belongs to the complex I LYR family. Mammalian complex I is composed of 45 different subunits.

It is found in the mitochondrion inner membrane. Functionally, accessory subunit of the mitochondrial membrane respiratory chain NADH dehydrogenase (Complex I), that is believed to be not involved in catalysis. Complex I functions in the transfer of electrons from NADH to the respiratory chain. The immediate electron acceptor for the enzyme is believed to be ubiquinone. The chain is NADH dehydrogenase [ubiquinone] 1 beta subcomplex subunit 9 (NDUFB9) from Bos taurus (Bovine).